Reading from the N-terminus, the 299-residue chain is Protoheme IX farnesyltransferase (299 aa).

The next 8 membrane-spanning stretches (helical) occupy residues 25-45 (IVSL…PDLA), 51-71 (LFGT…NHLI), 97-117 (ALAF…FLVN), 119-139 (LTAW…TAFL), 147-167 (IVLG…AVTG), 173-193 (AFLL…ALAL), 225-245 (FLLF…LLYL), and 275-295 (FGYS…DHYL).

Belongs to the UbiA prenyltransferase family. Protoheme IX farnesyltransferase subfamily.

It is found in the cell inner membrane. It catalyses the reaction heme b + (2E,6E)-farnesyl diphosphate + H2O = Fe(II)-heme o + diphosphate. It participates in porphyrin-containing compound metabolism; heme O biosynthesis; heme O from protoheme: step 1/1. Its function is as follows. Converts heme B (protoheme IX) to heme O by substitution of the vinyl group on carbon 2 of heme B porphyrin ring with a hydroxyethyl farnesyl side group. This Nitrosococcus oceani (strain ATCC 19707 / BCRC 17464 / JCM 30415 / NCIMB 11848 / C-107) protein is Protoheme IX farnesyltransferase.